Reading from the N-terminus, the 247-residue chain is Mast cell protease 2 (247 aa).

The N-terminal stretch at 1–18 (MQALLFLMALLLPSGAGA) is a signal peptide. A propeptide spans 19–20 (EE) (activation peptide). In terms of domain architecture, Peptidase S1 spans 21–244 (IIGGVESIPH…YVPWINAVIN (224 aa)). Residues C50 and C66 are joined by a disulfide bond. Active-site charge relay system residues include H65 and D109. Cystine bridges form between C143–C208 and C174–C187. S202 serves as the catalytic Charge relay system.

Belongs to the peptidase S1 family. Granzyme subfamily.

This enzyme, isolated from small intestine, specifically inactivates the apo forms of a certain group of intracellular pyridoxal phosphate-requiring enzymes. It has chymotrypsin-like specificity towards small substrates. The polypeptide is Mast cell protease 2 (Mcpt2) (Rattus norvegicus (Rat)).